We begin with the raw amino-acid sequence, 234 residues long: Large ribosomal subunit protein uL1 (234 aa).

The protein belongs to the universal ribosomal protein uL1 family. Part of the 50S ribosomal subunit.

In terms of biological role, binds directly to 23S rRNA. The L1 stalk is quite mobile in the ribosome, and is involved in E site tRNA release. Protein L1 is also a translational repressor protein, it controls the translation of the L11 operon by binding to its mRNA. In Baumannia cicadellinicola subsp. Homalodisca coagulata, this protein is Large ribosomal subunit protein uL1.